Here is a 901-residue protein sequence, read N- to C-terminus: Protein translocase subunit SecA (901 aa).

ATP-binding positions include glutamine 87, 105-109 (GEGKT), and aspartate 512. Positions 885, 887, 896, and 897 each coordinate Zn(2+).

It belongs to the SecA family. As to quaternary structure, monomer and homodimer. Part of the essential Sec protein translocation apparatus which comprises SecA, SecYEG and auxiliary proteins SecDF-YajC and YidC. Requires Zn(2+) as cofactor.

The protein resides in the cell inner membrane. It is found in the cytoplasm. It carries out the reaction ATP + H2O + cellular proteinSide 1 = ADP + phosphate + cellular proteinSide 2.. In terms of biological role, part of the Sec protein translocase complex. Interacts with the SecYEG preprotein conducting channel. Has a central role in coupling the hydrolysis of ATP to the transfer of proteins into and across the cell membrane, serving both as a receptor for the preprotein-SecB complex and as an ATP-driven molecular motor driving the stepwise translocation of polypeptide chains across the membrane. The chain is Protein translocase subunit SecA from Salmonella arizonae (strain ATCC BAA-731 / CDC346-86 / RSK2980).